Consider the following 465-residue polypeptide: Chromosomal replication initiator protein DnaA (465 aa).

The interval 1–84 (MSLSLWQQCL…RFEVGSKPLV (84 aa)) is domain I, interacts with DnaA modulators. Positions 84-128 (VQTISQPAQSHHNPVSVARQQPVRMAPVRPSWDNSPVQAEHTYRS) are domain II. The tract at residues 129 to 345 (NVNPKHTFDN…GALNRVIANA (217 aa)) is domain III, AAA+ region. Residues Gly-173, Gly-175, Lys-176, and Thr-177 each coordinate ATP. The domain IV, binds dsDNA stretch occupies residues 346–465 (NFTGRSITID…FSNLIRTLSS (120 aa)).

This sequence belongs to the DnaA family. In terms of assembly, oligomerizes as a right-handed, spiral filament on DNA at oriC.

It is found in the cytoplasm. Functionally, plays an essential role in the initiation and regulation of chromosomal replication. ATP-DnaA binds to the origin of replication (oriC) to initiate formation of the DNA replication initiation complex once per cell cycle. Binds the DnaA box (a 9 base pair repeat at the origin) and separates the double-stranded (ds)DNA. Forms a right-handed helical filament on oriC DNA; dsDNA binds to the exterior of the filament while single-stranded (ss)DNA is stabiized in the filament's interior. The ATP-DnaA-oriC complex binds and stabilizes one strand of the AT-rich DNA unwinding element (DUE), permitting loading of DNA polymerase. After initiation quickly degrades to an ADP-DnaA complex that is not apt for DNA replication. Binds acidic phospholipids. This is Chromosomal replication initiator protein DnaA from Pectobacterium atrosepticum (strain SCRI 1043 / ATCC BAA-672) (Erwinia carotovora subsp. atroseptica).